We begin with the raw amino-acid sequence, 407 residues long: Imidazolonepropionase (407 aa).

Fe(3+)-binding residues include H68 and H70. Zn(2+) contacts are provided by H68 and H70. 3 residues coordinate 4-imidazolone-5-propanoate: R77, Y140, and H173. Y140 is an N-formimidoyl-L-glutamate binding site. Position 238 (H238) interacts with Fe(3+). H238 is a binding site for Zn(2+). Q241 is a 4-imidazolone-5-propanoate binding site. D313 is a Fe(3+) binding site. D313 contacts Zn(2+). N315 and G317 together coordinate N-formimidoyl-L-glutamate. Residue T318 coordinates 4-imidazolone-5-propanoate.

It belongs to the metallo-dependent hydrolases superfamily. HutI family. The cofactor is Zn(2+). Fe(3+) is required as a cofactor.

It localises to the cytoplasm. It carries out the reaction 4-imidazolone-5-propanoate + H2O = N-formimidoyl-L-glutamate. It participates in amino-acid degradation; L-histidine degradation into L-glutamate; N-formimidoyl-L-glutamate from L-histidine: step 3/3. Functionally, catalyzes the hydrolytic cleavage of the carbon-nitrogen bond in imidazolone-5-propanoate to yield N-formimidoyl-L-glutamate. It is the third step in the universal histidine degradation pathway. The protein is Imidazolonepropionase of Burkholderia cenocepacia (strain HI2424).